Reading from the N-terminus, the 224-residue chain is ATP-dependent dethiobiotin synthetase BioD (224 aa).

Threonine 18 provides a ligand contact to Mg(2+). Lysine 39 is a catalytic residue. Serine 43 is a binding site for substrate. The Mg(2+) site is built by aspartate 56 and glutamate 117. ATP is bound by residues aspartate 56, 117-120, and 177-178; these read EGVG and NE.

This sequence belongs to the dethiobiotin synthetase family. As to quaternary structure, homodimer. It depends on Mg(2+) as a cofactor.

The protein resides in the cytoplasm. The enzyme catalyses (7R,8S)-7,8-diammoniononanoate + CO2 + ATP = (4R,5S)-dethiobiotin + ADP + phosphate + 3 H(+). The protein operates within cofactor biosynthesis; biotin biosynthesis; biotin from 7,8-diaminononanoate: step 1/2. In terms of biological role, catalyzes a mechanistically unusual reaction, the ATP-dependent insertion of CO2 between the N7 and N8 nitrogen atoms of 7,8-diaminopelargonic acid (DAPA, also called 7,8-diammoniononanoate) to form a ureido ring. This Xanthomonas euvesicatoria pv. vesicatoria (strain 85-10) (Xanthomonas campestris pv. vesicatoria) protein is ATP-dependent dethiobiotin synthetase BioD.